Reading from the N-terminus, the 175-residue chain is Ribosome maturation factor RimM (175 aa).

The region spanning 100–174 (EDEYYWNDVI…VKHKIITVIW (75 aa)) is the PRC barrel domain.

Belongs to the RimM family. As to quaternary structure, binds ribosomal protein uS19.

It is found in the cytoplasm. In terms of biological role, an accessory protein needed during the final step in the assembly of 30S ribosomal subunit, possibly for assembly of the head region. Essential for efficient processing of 16S rRNA. May be needed both before and after RbfA during the maturation of 16S rRNA. It has affinity for free ribosomal 30S subunits but not for 70S ribosomes. This is Ribosome maturation factor RimM from Buchnera aphidicola subsp. Schizaphis graminum (strain Sg).